The following is a 443-amino-acid chain: Ribosomal protein uS12 methylthiotransferase RimO (443 aa).

Residues 10 to 120 (PRVGFVSLGC…VMQAVHRHLP (111 aa)) form the MTTase N-terminal domain. Cys-19, Cys-55, Cys-84, Cys-151, Cys-155, and Cys-158 together coordinate [4Fe-4S] cluster. The Radical SAM core domain occupies 137-375 (LTPQHYAYLK…DFQEDISTQR (239 aa)). A TRAM domain is found at 377 to 443 (EAKIGREMTV…IHDLYAERVV (67 aa)).

This sequence belongs to the methylthiotransferase family. RimO subfamily. [4Fe-4S] cluster is required as a cofactor.

It localises to the cytoplasm. The enzyme catalyses L-aspartate(89)-[ribosomal protein uS12]-hydrogen + (sulfur carrier)-SH + AH2 + 2 S-adenosyl-L-methionine = 3-methylsulfanyl-L-aspartate(89)-[ribosomal protein uS12]-hydrogen + (sulfur carrier)-H + 5'-deoxyadenosine + L-methionine + A + S-adenosyl-L-homocysteine + 2 H(+). In terms of biological role, catalyzes the methylthiolation of an aspartic acid residue of ribosomal protein uS12. The protein is Ribosomal protein uS12 methylthiotransferase RimO of Azoarcus sp. (strain BH72).